A 277-amino-acid polypeptide reads, in one-letter code: Sulfur carrier protein FdhD (277 aa).

Cysteine 121 serves as the catalytic Cysteine persulfide intermediate. 260–265 (FCKPGR) is a binding site for Mo-bis(molybdopterin guanine dinucleotide).

It belongs to the FdhD family.

It localises to the cytoplasm. Functionally, required for formate dehydrogenase (FDH) activity. Acts as a sulfur carrier protein that transfers sulfur from IscS to the molybdenum cofactor prior to its insertion into FDH. The polypeptide is Sulfur carrier protein FdhD (Escherichia coli O81 (strain ED1a)).